We begin with the raw amino-acid sequence, 494 residues long: Splicing regulatory glutamine/lysine-rich protein 1 (494 aa).

In terms of domain architecture, RRM spans 69–145 (RTVYVGNLNS…RPLKINHSNN (77 aa)). 2 positions are modified to phosphoserine: S174 and S187. A disordered region spans residues 176–494 (ISAAIEPESG…ERLCSTADAV (319 aa)). The segment covering 183–192 (ESGKSNERKG) has biased composition (basic and acidic residues). 2 stretches are compositionally biased toward basic residues: residues 193-230 (GRSRSHTRSKSRSSSKSHSRRKRSQSKHRSRSHNRSRS) and 238-262 (SKSPHKKRSKSRERRKSRSRSRSRD). Over residues 263–340 (KRKDTREKVK…DRSKEADEKR (78 aa)) the composition is skewed to basic and acidic residues. Position 348 is a phosphothreonine (T348). Basic residues predominate over residues 357–373 (RRSRSASRERRRRRSRS). 2 stretches are compositionally biased toward basic and acidic residues: residues 404 to 453 (REKE…KEAD) and 463 to 474 (KDTARTEEESKA).

Belongs to the splicing factor SR family. Interacts with SREK1IP1. Homodimer. Binds SFRS1, SFRS2, SFRS3 and SFRS6. Interacts with the spliceosome. In terms of tissue distribution, ubiquitous. Detected in liver, brain, lung, spleen, testis and pancreas.

Its subcellular location is the nucleus. Its function is as follows. Participates in the regulation of alternative splicing by modulating the activity of other splice facors. Inhibits the splicing activity of SFRS1, SFRS2 and SFRS6. Augments the splicing activity of SFRS3. The polypeptide is Splicing regulatory glutamine/lysine-rich protein 1 (Srek1) (Rattus norvegicus (Rat)).